The sequence spans 220 residues: Deoxyribose-phosphate aldolase 1 (220 aa).

Catalysis depends on Asp89, which acts as the Proton donor/acceptor. The active-site Schiff-base intermediate with acetaldehyde is the Lys151. Catalysis depends on Lys180, which acts as the Proton donor/acceptor.

Belongs to the DeoC/FbaB aldolase family. DeoC type 1 subfamily.

The protein localises to the cytoplasm. The enzyme catalyses 2-deoxy-D-ribose 5-phosphate = D-glyceraldehyde 3-phosphate + acetaldehyde. It participates in carbohydrate degradation; 2-deoxy-D-ribose 1-phosphate degradation; D-glyceraldehyde 3-phosphate and acetaldehyde from 2-deoxy-alpha-D-ribose 1-phosphate: step 2/2. In terms of biological role, catalyzes a reversible aldol reaction between acetaldehyde and D-glyceraldehyde 3-phosphate to generate 2-deoxy-D-ribose 5-phosphate. The protein is Deoxyribose-phosphate aldolase 1 of Staphylococcus aureus (strain MRSA252).